Here is a 570-residue protein sequence, read N- to C-terminus: Urease subunit alpha (570 aa).

Positions 132 to 570 (GGIDTHVHFI…LPMAQRYFLF (439 aa)) constitute a Urease domain. Ni(2+)-binding residues include His137 and His139. Substrate is bound by residues His139 and Ala170. Residue Lys220 coordinates Ni(2+). Lys220 bears the N6-carboxylysine mark. Residues His222 and His249 each coordinate substrate. Ni(2+)-binding residues include His249 and His275. The Proton donor role is filled by His323. Position 363 (Asp363) interacts with Ni(2+). Position 366 (Ala366) interacts with substrate.

This sequence belongs to the metallo-dependent hydrolases superfamily. Urease alpha subunit family. Heterotrimer of UreA (gamma), UreB (beta) and UreC (alpha) subunits. Three heterotrimers associate to form the active enzyme. Ni cation serves as cofactor. Post-translationally, carboxylation allows a single lysine to coordinate two nickel ions.

Its subcellular location is the cytoplasm. The enzyme catalyses urea + 2 H2O + H(+) = hydrogencarbonate + 2 NH4(+). Its pathway is nitrogen metabolism; urea degradation; CO(2) and NH(3) from urea (urease route): step 1/1. Its activity is regulated as follows. Inhibited by fluoride. In Sporosarcina pasteurii (Bacillus pasteurii), this protein is Urease subunit alpha.